The sequence spans 272 residues: Glutamate racemase (272 aa).

Substrate-binding positions include 16–17 and 48–49; these read DS and YG. Catalysis depends on Cys79, which acts as the Proton donor/acceptor. 80–81 contributes to the substrate binding site; that stretch reads NT. Residue Cys191 is the Proton donor/acceptor of the active site. 192-193 provides a ligand contact to substrate; it reads TH.

The protein belongs to the aspartate/glutamate racemases family.

It catalyses the reaction L-glutamate = D-glutamate. The protein operates within cell wall biogenesis; peptidoglycan biosynthesis. In terms of biological role, provides the (R)-glutamate required for cell wall biosynthesis. The protein is Glutamate racemase of Chlorobaculum parvum (strain DSM 263 / NCIMB 8327) (Chlorobium vibrioforme subsp. thiosulfatophilum).